We begin with the raw amino-acid sequence, 480 residues long: MSLKKKISYSEDVSGSEKANELLKWLQAYIPGKDSNIVVEHEPSKDAAKELIRGDYRWGHQDDDKSKAFQLKYSFLESKPDNMPWHISEFSAFNEAQKAAAKLSIQSWADVANINFVETTDAKEANVTFGFFDVSLTGSYAFAYLPTPEKTQVGTWYNAKSRTFLNNDIDVNGYGRQTFTHEIGHTLGLQHPADYNASDKVSPTYKNSATYFEDSRAYTVMSYFGEKNTGQDFKGIYSSAPLLNDISAIQAVYGANNTIRADDTVYGFNSNTDRDFYTAKDENSKLLFTAWDTGGNDTFDFSGFTQDQRINLNEASFSDVGGLKGNVSIARGVTIENAIGGSGNDVLIGNDAANTLKGGAGDDIIYGGLGADNLWGGEGNDTFVYLSAKESPPLERDWIHDFVSGKDKIDVSLFDLGEAGKGGVKFVREFTGEVGEAVLRYNTVDKVNDFAINLGGEFSYDDFWVKIVGEPILESDFILS.

Residue His181 participates in Zn(2+) binding. Glu182 is an active-site residue. Zn(2+) contacts are provided by His185 and His191. Residues Arg260, Asp263, Asp292, Gly294, Gly295, Asp297, Thr334, and Glu336 each contribute to the Ca(2+) site. 2 Hemolysin-type calcium-binding repeats span residues 339-356 and 357-374; these read IGGS…ANTL and KGGA…ADNL.

This sequence belongs to the peptidase M10B family. Zn(2+) is required as a cofactor. The cofactor is Ca(2+).

The protein resides in the secreted. The enzyme catalyses Preferential cleavage of bonds with hydrophobic residues in P1'.. In Photorhabdus laumondii subsp. laumondii (strain DSM 15139 / CIP 105565 / TT01) (Photorhabdus luminescens subsp. laumondii), this protein is Serralysin (prtA).